Here is a 340-residue protein sequence, read N- to C-terminus: Integral membrane protein SED5 (340 aa).

Topologically, residues 1–319 (MNIKDRTSEF…KYFDRIKSNR (319 aa)) are cytoplasmic. Residues 31–51 (RLQEKESENFANNTTGNGKSV) form a disordered region. A compositionally biased stretch (polar residues) spans 39–51 (NFANNTTGNGKSV). Residues 146 to 173 (LNTQMKNISGSFKDVLEERQRLEMANKD) adopt a coiled-coil conformation. Positions 180-231 (TDTGHAPADDQTQSNHAADLTTYNNSNPFMTSLLDESSEKNNNSSNQGELSF) are disordered. Over residues 189–209 (DQTQSNHAADLTTYNNSNPFM) the composition is skewed to polar residues. The 63-residue stretch at 249-311 (NVYLQERNRA…SGAQRELLKY (63 aa)) folds into the t-SNARE coiled-coil homology domain. The helical; Anchor for type IV membrane protein transmembrane segment at 320 to 340 (WLAAKVFFIIFVFFVIWVLVN) threads the bilayer.

This sequence belongs to the syntaxin family. Interacts with SLY1, STF1, SFB3 and GOS1.

Its subcellular location is the membrane. The protein resides in the golgi apparatus membrane. In terms of biological role, required for vesicular transport between the endoplasmic reticulum and the Golgi complex. Acts as a target organelle soluble NSF attachment protein receptor (t-SNARE). The polypeptide is Integral membrane protein SED5 (SED5) (Saccharomyces cerevisiae (strain ATCC 204508 / S288c) (Baker's yeast)).